The following is a 117-amino-acid chain: Resistin-like gamma (117 aa).

An N-terminal signal peptide occupies residues 1 to 29 (MLTFNKMKTTTCSLLICISLLQLMVPVNT). 5 disulfides stabilise this stretch: cysteine 61–cysteine 114, cysteine 73–cysteine 113, cysteine 82–cysteine 99, cysteine 84–cysteine 101, and cysteine 88–cysteine 103.

This sequence belongs to the resistin/FIZZ family. As to quaternary structure, homodimer. Heterodimer with RETNLB. Expressed in colon, lung, spleen, pancreas, ileum and bone marrow (at protein level). In colon, found throughout the crypt and surface epithelium, including goblet cells (at protein level). Highest expression is observed in bone marrow, spleen and lung, with lower levels in other tissues. Detected at low levels in granulocytes, but not found in monocytes or lymphocytes. Has very weak expression in white adipose tissue.

It is found in the secreted. In terms of biological role, probable hormone. Promotes chemotaxis in myeloid cells. In Mus musculus (Mouse), this protein is Resistin-like gamma.